The following is a 297-amino-acid chain: Ketohexokinase (297 aa).

Residues aspartate 15, glycine 41, asparagine 42, and asparagine 45 each coordinate beta-D-fructose. Residues arginine 107, 225–228 (AEEG), and 254–257 (GAGD) contribute to the ATP site. Aspartate 257 serves as a coordination point for beta-D-fructose.

This sequence belongs to the carbohydrate kinase PfkB family. As to quaternary structure, homodimer.

It carries out the reaction beta-D-fructose + ATP = beta-D-fructose 1-phosphate + ADP + H(+). Its pathway is carbohydrate metabolism; fructose metabolism. With respect to regulation, requires potassium. Inhibition by ADP. Catalyzes the phosphorylation of the ketose sugar fructose to fructose-1-phosphate. The chain is Ketohexokinase (KHK) from Pongo abelii (Sumatran orangutan).